A 419-amino-acid polypeptide reads, in one-letter code: Histidine--tRNA ligase (419 aa).

Belongs to the class-II aminoacyl-tRNA synthetase family. Homodimer.

Its subcellular location is the cytoplasm. The enzyme catalyses tRNA(His) + L-histidine + ATP = L-histidyl-tRNA(His) + AMP + diphosphate + H(+). This is Histidine--tRNA ligase from Thermosipho melanesiensis (strain DSM 12029 / CIP 104789 / BI429).